Here is a 399-residue protein sequence, read N- to C-terminus: Sphingosine-1-phosphate phosphatase 2 (399 aa).

4 helical membrane passes run 88-108 (YLFQFSAALGQEVFYITFLPF), 121-141 (LIIIWVLVMYIGQVAKDVLKW), 160-180 (YGMPSTHAMAATAIAFTLLIS), and 185-205 (YQYPFVLGLVMAVVFSTLVCL). The phosphatase sequence motif I stretch occupies residues 136–144 (KDVLKWPRP). The segment at 163 to 166 (PSTH) is phosphatase sequence motif II. The Proton donor role is filled by H166. The tract at residues 206-217 (SRLYTGMHTVLD) is phosphatase sequence motif III. H213 serves as the catalytic Nucleophile. The next 5 membrane-spanning stretches (helical) occupy residues 219–239 (LGGVLITALLIVLTYPAWTFI), 247–267 (PLFPVCVIVVPFFLCYNYPVS), 280–300 (ILAAGAGVTIGFWINHFFQLV), 318–338 (TYMLVLGLTKFAVGIVLILLV), and 371–391 (VPYKFVTYTSVGICATTFVPM).

It belongs to the type 2 lipid phosphate phosphatase family. As to expression, expressed strongly in kidney and heart, followed by brain, colon, small intestine and lung. Not detected in skeletal muscle, thymus, spleen, liver, placenta, and peripheral blood leukocytes.

The protein resides in the endoplasmic reticulum membrane. It catalyses the reaction sphinganine 1-phosphate + H2O = sphinganine + phosphate. The enzyme catalyses sphing-4-enine 1-phosphate + H2O = sphing-4-enine + phosphate. The catalysed reaction is (4R)-hydroxysphinganine 1-phosphate + H2O = (4R)-hydroxysphinganine + phosphate. Its function is as follows. Has specific phosphohydrolase activity towards sphingoid base 1-phosphates. Has high phosphohydrolase activity against dihydrosphingosine-1-phosphate and sphingosine-1-phosphate (S1P) in vitro. Sphingosine-1-phosphate phosphatase activity is needed for efficient recycling of sphingosine into the sphingolipid synthesis pathway. May play a role in attenuating intracellular sphingosine 1-phosphate (S1P) signaling. May play a role in pro-inflammatory signaling. Plays a role in the regulation of pancreatic islet beta-cell endoplasmic reticulum stress and proliferation. This chain is Sphingosine-1-phosphate phosphatase 2, found in Homo sapiens (Human).